A 584-amino-acid polypeptide reads, in one-letter code: A-type ATP synthase subunit A (584 aa).

234–241 contributes to the ATP binding site; it reads GPFGSGKT.

It belongs to the ATPase alpha/beta chains family. As to quaternary structure, has multiple subunits with at least A(3), B(3), C, D, E, F, H, I and proteolipid K(x).

The protein resides in the cell membrane. It catalyses the reaction ATP + H2O + 4 H(+)(in) = ADP + phosphate + 5 H(+)(out). Its function is as follows. Component of the A-type ATP synthase that produces ATP from ADP in the presence of a proton gradient across the membrane. The A chain is the catalytic subunit. The protein is A-type ATP synthase subunit A of Methanoculleus marisnigri (strain ATCC 35101 / DSM 1498 / JR1).